Here is a 204-residue protein sequence, read N- to C-terminus: uncharacterized protein (204 aa).

Disordered regions lie at residues 1 to 37 and 159 to 204; these read MRAL…GSVS and GYRP…DGEL. A compositionally biased stretch (low complexity) spans 28–37; sequence GRGPRAGSVS. Positions 88-175 constitute a WGR domain; it reads PYRLYVERLD…LPKEKWPAEA (88 aa). Composition is skewed to basic and acidic residues over residues 166-179 and 188-204; these read LPKE…EHES and PEGH…DGEL.

This is an uncharacterized protein from Sinorhizobium fredii (strain NBRC 101917 / NGR234).